We begin with the raw amino-acid sequence, 166 residues long: Cold-inducible RNA-binding protein B (166 aa).

Residues 5–83 (GKLFIGGLNF…RQIRVDQAGK (79 aa)) form the RRM domain. The disordered stretch occupies residues 68–166 (GKAVDGRQIR…DSYDSYATHE (99 aa)). Over residues 92–115 (YRGGSSGGRGFFRGGRGRGGGDRG) the composition is skewed to gly residues. The span at 133 to 149 (GSRDYYSSGRSQGSYGD) shows a compositional bias: low complexity. Basic and acidic residues predominate over residues 157-166 (DSYDSYATHE).

Interacts with prmt1. Interacts with elavl1/elrA (via RRM3). Associates with ribosomes. Methylated on arginine residues within RGG motifs. Methylation by prmt1 promotes cytoplasmic accumulation. In adults, most abundant in testis, ovary, brain and liver, with lower expression in kidney and heart.

It is found in the nucleus. Its subcellular location is the nucleoplasm. The protein resides in the cytoplasm. Functionally, cold-inducible mRNA binding protein. Acts cooperatively with elavl1/elrA to stabilize AU-rich element (ARE)-containing mRNAs by binding to them and inhibiting their deadenylation. Essential for embryonic gastrulation and neural development, acting to maintain the expression of a set of adhesion molecules, and cell movement during embryogenesis. Required for pronephros development. The chain is Cold-inducible RNA-binding protein B (cirbp-b) from Xenopus laevis (African clawed frog).